Reading from the N-terminus, the 482-residue chain is tRNA sulfurtransferase (482 aa).

In terms of domain architecture, THUMP spans 61–165 (VQICDALTRI…QDVLILVKAR (105 aa)). Residues 183 to 184 (LI), Lys-265, Gly-287, and Gln-296 contribute to the ATP site. Cysteines 344 and 456 form a disulfide. In terms of domain architecture, Rhodanese spans 404-482 (FAPTDVLLDI…GFDNVKVYRP (79 aa)). The active-site Cysteine persulfide intermediate is the Cys-456.

This sequence belongs to the ThiI family.

It localises to the cytoplasm. It catalyses the reaction [ThiI sulfur-carrier protein]-S-sulfanyl-L-cysteine + a uridine in tRNA + 2 reduced [2Fe-2S]-[ferredoxin] + ATP + H(+) = [ThiI sulfur-carrier protein]-L-cysteine + a 4-thiouridine in tRNA + 2 oxidized [2Fe-2S]-[ferredoxin] + AMP + diphosphate. It carries out the reaction [ThiS sulfur-carrier protein]-C-terminal Gly-Gly-AMP + S-sulfanyl-L-cysteinyl-[cysteine desulfurase] + AH2 = [ThiS sulfur-carrier protein]-C-terminal-Gly-aminoethanethioate + L-cysteinyl-[cysteine desulfurase] + A + AMP + 2 H(+). Its pathway is cofactor biosynthesis; thiamine diphosphate biosynthesis. Functionally, catalyzes the ATP-dependent transfer of a sulfur to tRNA to produce 4-thiouridine in position 8 of tRNAs, which functions as a near-UV photosensor. Also catalyzes the transfer of sulfur to the sulfur carrier protein ThiS, forming ThiS-thiocarboxylate. This is a step in the synthesis of thiazole, in the thiamine biosynthesis pathway. The sulfur is donated as persulfide by IscS. The protein is tRNA sulfurtransferase of Photorhabdus laumondii subsp. laumondii (strain DSM 15139 / CIP 105565 / TT01) (Photorhabdus luminescens subsp. laumondii).